Here is a 515-residue protein sequence, read N- to C-terminus: Envelope glycoprotein (515 aa).

A signal peptide spans 1-33 (MPKERRSRRRPQPIIRWVSLTLTLLALCQPIQT). Residues 34 to 436 (WRCSLSLGNQ…GLTAWVRETI (403 aa)) are Extracellular-facing. N129 and N203 each carry an N-linked (GlcNAc...) asparagine; by host glycan. Residues 212 to 215 (CAIC) carry the CXXC motif. Cystine bridges form between C212–C215, C212–C392, and C384–C391. N-linked (GlcNAc...) asparagine; by host glycosylation is found at N230, N251, N256, N271, and N287. The fusion peptide stretch occupies residues 304 to 324 (VAALTLGLALSVGLTGINVAV). Coiled coils occupy residues 330 to 376 (QRLT…WLYI) and 388 to 420 (NEPCCFLRIQNDSIIRLGDLQPLSQRVSTDWQW). An N-linked (GlcNAc...) asparagine; by host glycan is attached at N351. Residues 365-381 (AQNRRGLDWLYIRLGFQ) form an immunosuppression region. The CX6CC signature appears at 384–392 (CPTINEPCC). An N-linked (GlcNAc...) asparagine; by host glycan is attached at N398. The helical transmembrane segment at 437–457 (HSVLSLFLLALFLLFLAPCLI) threads the bilayer. C455 carries S-palmitoyl cysteine; by host lipidation. The Cytoplasmic segment spans residues 458–515 (KCLTSRLLKLLRQAPHFPEISFPPKPDSDYQALLPSAPEIYSHLSPTKPDYINLRPCP).

As to quaternary structure, the mature envelope protein (Env) consists of a trimer of SU-TM heterodimers attached by a labile interchain disulfide bond. In terms of processing, specific enzymatic cleavages in vivo yield mature proteins. Envelope glycoproteins are synthesized as an inactive precursor that is N-glycosylated and processed likely by host cell furin or by a furin-like protease in the Golgi to yield the mature SU and TM proteins. The cleavage site between SU and TM requires the minimal sequence [KR]-X-[KR]-R. The CXXC motif is highly conserved across a broad range of retroviral envelope proteins. It is thought to participate in the formation of a labile disulfide bond possibly with the CX6CC motif present in the transmembrane protein. Isomerization of the intersubunit disulfide bond to an SU intrachain disulfide bond is thought to occur upon receptor recognition in order to allow membrane fusion. Post-translationally, the transmembrane protein is palmitoylated.

The protein resides in the virion membrane. It is found in the host cell membrane. Its function is as follows. The surface protein (SU) attaches the virus to the host cell by binding to its receptor. This interaction triggers the refolding of the transmembrane protein (TM) and is thought to activate its fusogenic potential by unmasking its fusion peptide. Fusion occurs at the host cell plasma membrane. Functionally, the transmembrane protein (TM) acts as a class I viral fusion protein. Under the current model, the protein has at least 3 conformational states: pre-fusion native state, pre-hairpin intermediate state, and post-fusion hairpin state. During viral and target cell membrane fusion, the coiled coil regions (heptad repeats) assume a trimer-of-hairpins structure, positioning the fusion peptide in close proximity to the C-terminal region of the ectodomain. The formation of this structure appears to drive apposition and subsequent fusion of viral and target cell membranes. Membranes fusion leads to delivery of the nucleocapsid into the cytoplasm. This Bos taurus (Bovine) protein is Envelope glycoprotein (env).